We begin with the raw amino-acid sequence, 436 residues long: Sarcosine reductase complex component B subunit beta (436 aa).

U350 is an active-site residue. A non-standard amino acid (selenocysteine) is located at residue U350.

This sequence belongs to the GrdB/GrdF/GrdH family. In terms of assembly, heterotetramer of two alpha and two beta subunits. Component of the sarcosine reductase complex, together with components A and C. PB is substrate specific.

The enzyme catalyses acetyl phosphate + methylamine + [thioredoxin]-disulfide + H2O = sarcosine + [thioredoxin]-dithiol + phosphate + H(+). Its function is as follows. In the first step of sarcosine reductase, the substrate is bound to component PB via a Schiff base intermediate. Then the PB-activated substrate is nucleophilically attacked by the selenol anion of component PA to transform it to a carboxymethylated selenoether and the respective amine. By action of component PC, acetyl phosphate is formed, leaving component PA in its oxidized state. Finally component PA becomes reduced by the thioredoxin system to start a new catalytic cycle of reductive deamination. The protein is Sarcosine reductase complex component B subunit beta (grdF) of Peptoclostridium acidaminophilum (Eubacterium acidaminophilum).